Reading from the N-terminus, the 294-residue chain is Taste receptor type 2 member 143 (294 aa).

Over 1–7 (MPSTPTL) the chain is Extracellular. A helical transmembrane segment spans residues 8 to 28 (IFIVIFFLVSVASMLQNGFMI). Over 29-43 (IVLGREWMRNRALPA) the chain is Cytoplasmic. The helical transmembrane segment at 44-64 (VDMIVASLASSRFCLHGIAIL) threads the bilayer. The Extracellular portion of the chain corresponds to 65 to 80 (NNFLASFDFCYQANFV). The helical transmembrane segment at 81–101 (GILWDFINTLILWLTAWLAIF) threads the bilayer. Topologically, residues 102–128 (YCVKISSFSHPVLFWLKWRISQLVPRL) are cytoplasmic. Residues 129–149 (LLVSLIMGGLSAIISATGNII) form a helical membrane-spanning segment. At 150-180 (ANQMIISQGFHGNCTFGHMSLDFYRYYYLSH) the chain is on the extracellular side. The N-linked (GlcNAc...) asparagine glycan is linked to Asn-162. The chain crosses the membrane as a helical span at residues 181–201 (AVLMWFTPFFLFLVSIIFLMF). Topologically, residues 202–227 (SLYRHVEKMRGHRPGPWDPRTQAHTM) are cytoplasmic. A helical transmembrane segment spans residues 228–248 (ALKSLTVFITFYILFFLALII). At 249-260 (SSTKSKTMHSYW) the chain is on the extracellular side. Residues 261–281 (YWVREIIIYTGIFLNSIILVL) form a helical membrane-spanning segment. Residues 282–294 (SNPKLRKALKMRF) lie on the Cytoplasmic side of the membrane.

Belongs to the G-protein coupled receptor T2R family.

It is found in the membrane. Functionally, putative taste receptor which may play a role in the perception of bitterness. The polypeptide is Taste receptor type 2 member 143 (Rattus norvegicus (Rat)).